A 782-amino-acid chain; its full sequence is Endonuclease MutS2 (782 aa).

336–343 (GPNTGGKT) serves as a coordination point for ATP. Positions 707-782 (LDLRGYRYEE…GFGVTVAELK (76 aa)) constitute a Smr domain.

This sequence belongs to the DNA mismatch repair MutS family. MutS2 subfamily. Homodimer. Binds to stalled ribosomes, contacting rRNA.

Endonuclease that is involved in the suppression of homologous recombination and thus may have a key role in the control of bacterial genetic diversity. Its function is as follows. Acts as a ribosome collision sensor, splitting the ribosome into its 2 subunits. Detects stalled/collided 70S ribosomes which it binds and splits by an ATP-hydrolysis driven conformational change. Acts upstream of the ribosome quality control system (RQC), a ribosome-associated complex that mediates the extraction of incompletely synthesized nascent chains from stalled ribosomes and their subsequent degradation. Probably generates substrates for RQC. This Staphylococcus carnosus (strain TM300) protein is Endonuclease MutS2.